Consider the following 288-residue polypeptide: Bifunctional protein FolD (288 aa).

Residues 166 to 168, serine 191, and valine 232 contribute to the NADP(+) site; that span reads GRS.

The protein belongs to the tetrahydrofolate dehydrogenase/cyclohydrolase family. As to quaternary structure, homodimer.

It catalyses the reaction (6R)-5,10-methylene-5,6,7,8-tetrahydrofolate + NADP(+) = (6R)-5,10-methenyltetrahydrofolate + NADPH. The enzyme catalyses (6R)-5,10-methenyltetrahydrofolate + H2O = (6R)-10-formyltetrahydrofolate + H(+). The protein operates within one-carbon metabolism; tetrahydrofolate interconversion. Functionally, catalyzes the oxidation of 5,10-methylenetetrahydrofolate to 5,10-methenyltetrahydrofolate and then the hydrolysis of 5,10-methenyltetrahydrofolate to 10-formyltetrahydrofolate. The protein is Bifunctional protein FolD of Roseiflexus sp. (strain RS-1).